We begin with the raw amino-acid sequence, 118 residues long: Non-specific lipid-transfer protein 1 (118 aa).

The first 25 residues, Met1–Ala25, serve as a signal peptide directing secretion. 4 disulfide bridges follow: Cys29–Cys76, Cys39–Cys53, Cys54–Cys100, and Cys74–Cys114.

Belongs to the plant LTP family. As to expression, expressed primarily in epidermal cells.

It localises to the secreted. The protein resides in the cell wall. Its function is as follows. Plant non-specific lipid-transfer proteins transfer phospholipids as well as galactolipids across membranes. May play a role in wax or cutin deposition in the cell walls of expanding epidermal cells and certain secretory tissues. In Arabidopsis thaliana (Mouse-ear cress), this protein is Non-specific lipid-transfer protein 1 (LTP1).